The primary structure comprises 289 residues: Urease accessory protein UreD (289 aa).

Belongs to the UreD family. As to quaternary structure, ureD, UreF and UreG form a complex that acts as a GTP-hydrolysis-dependent molecular chaperone, activating the urease apoprotein by helping to assemble the nickel containing metallocenter of UreC. The UreE protein probably delivers the nickel.

The protein resides in the cytoplasm. Its function is as follows. Required for maturation of urease via the functional incorporation of the urease nickel metallocenter. This Xanthobacter autotrophicus (strain ATCC BAA-1158 / Py2) protein is Urease accessory protein UreD.